The chain runs to 173 residues: uncharacterized protein (173 aa).

3 consecutive transmembrane segments (helical) span residues 24–44 (VAFI…WLFF), 82–102 (YILF…SYFI), and 135–155 (LIKR…ILFS).

The protein resides in the cell membrane. This is an uncharacterized protein from Rickettsia prowazekii (strain Madrid E).